The primary structure comprises 425 residues: Type I restriction enzyme MjaVII specificity subunit (425 aa).

Residues 9-168 are target recognition domain 1; the sequence is KKTEIGEIPE…KSFKIPLPPL (160 aa). The interval 169–208 is central conserved region (CCR); it reads EEQKQIAKILTKIDEGIEIIEKSINKLERIKKGLMHKLLT. Residues 169 to 208 adopt a coiled-coil conformation; that stretch reads EEQKQIAKILTKIDEGIEIIEKSINKLERIKKGLMHKLLT. Positions 209-368 are target recognition domain 2; that stretch reads KGIGHSRFKK…TFKELSKSML (160 aa). A coiled-coil region spans residues 369 to 418; that stretch reads ENFKIPLPPLEEQKQIAKILSSVDKSIELKKQKKEKLQRMKKKIMELLLT. Positions 369 to 418 are distal conserved region (DCR); it reads ENFKIPLPPLEEQKQIAKILSSVDKSIELKKQKKEKLQRMKKKIMELLLT.

The protein belongs to the type-I restriction system S methylase family. In terms of assembly, the type I restriction/modification system is composed of three polypeptides R, M and S.

Its function is as follows. The specificity (S) subunit of a type I restriction enzyme; this subunit dictates DNA sequence specificity. The M and S subunits together form a methyltransferase (MTase) that methylates A-3 on the top and bottom strands of the sequence 5'-CAAN(7)TGG-3'. In the presence of the R subunit the complex can also act as an endonuclease, binding to the same target sequence but cutting the DNA some distance from this site. Whether the DNA is cut or modified depends on the methylation state of the target sequence. When the target site is unmodified, the DNA is cut. When the target site is hemimethylated, the complex acts as a maintenance MTase modifying the DNA so that both strands become methylated. After locating a non-methylated recognition site, the enzyme complex serves as a molecular motor that translocates DNA in an ATP-dependent manner until a collision occurs that triggers cleavage. This Methanocaldococcus jannaschii (strain ATCC 43067 / DSM 2661 / JAL-1 / JCM 10045 / NBRC 100440) (Methanococcus jannaschii) protein is Type I restriction enzyme MjaVII specificity subunit.